Here is a 776-residue protein sequence, read N- to C-terminus: Angiomotin-like protein 2 (776 aa).

The interval 41 to 88 (GGAGAGGTGSPQASAEILAPEDTQVLQQATRQEPQGQEHQGGESHLAE) is disordered. The required for interaction with CDH5 stretch occupies residues 101–307 (GEELPTYEEA…STQTSSAPSG (207 aa)). At tyrosine 107 the chain carries Phosphotyrosine. Disordered regions lie at residues 119–142 (AQQAGPRPHVGDRDPRGAPGGHRS), 169–215 (RNGA…QYPH), and 283–309 (GPLGALSPPEVEGPASTQTSSAPSGSA). The span at 177-192 (HMSSSHSFPQLARNQQ) shows a compositional bias: polar residues. The segment covering 196-213 (PRGPPAEGPEPRGPPPQY) has biased composition (pro residues). Residues 220-307 (HETATAVTDP…STQTSSAPSG (88 aa)) are required for interaction with CDH1. Positions 297–306 (ASTQTSSAPS) are enriched in polar residues. Coiled coils occupy residues 314–509 (METL…LELR) and 543–570 (ALRLSEQLREKEEQILALEADMTKWEQK). Glycyl lysine isopeptide (Lys-Gly) (interchain with G-Cter in ubiquitin) cross-links involve residues lysine 347 and lysine 408. Disordered stretches follow at residues 591 to 620 (QRDTTLIRHSPQPSPSSSFNEGLLTGGHRH) and 677 to 743 (TQGW…LDPD). Over residues 678–687 (QGWQSLSSSE) the composition is skewed to polar residues. A phosphoserine mark is found at serine 756 and serine 759. Positions 773-776 (EILI) match the PDZ-binding motif.

This sequence belongs to the angiomotin family. Part of a complex composed of AMOTL2, MAGI1 and CDH5, within the complex AMOTL2 acts as a scaffold protein for the interaction of MAGI1 with CDH5. The complex is required for coupling actin fibers to cell junctions in endothelial cells. Within the complex AMOTL2 (via its N-terminus) interacts with CDH5. Interacts (via N-terminus) with MAGI1. Interacts (via N-terminus) with ACTB; the interaction facilitates binding of cell junction complexes to actin fibers in endothelial cells. Interacts with CDH1; the interaction may facilitate binding of radial actin fibers to cell junction complexes. Interacts with SRC. Interacts with YAP1; the interaction is required for ubiquitination of AMOTL2 and localization of YAP1 to tight junctions. Interacts with WWP1; the interaction facilitates WWP1 interaction with the Crumbs complex and subsequent WWP1 translocation to the plasma membrane. WPP1 interaction with the Crumbs complex promotes WPP1 monoubiquitination of AMOTL2 which subsequently activates the Hippo signaling pathway. When ubiquitinated interacts with LATS2 (via UBA domain); the interaction promotes LATS2 phosphorylation of YAP1. Interacts (via PPXY motif) with WWTR1/TAZ (via WW domain); the interaction promotes WWTR1/TAZ localization to the cytoplasm and thereby inhibition of its transcriptional properties. Interacts with PHLDB2; interaction may facilitate PHLDB2 localization to the myotube podosome cortex that surrounds the core. Post-translationally, monoubiquitinated at Lys-347 and Lys-408 by Crumbs complex-bound WWP1. De-ubiquitinated at Lys-347 and Lys-408 by USP9X; the interaction may be promoted by cell contact inhibition. Deubiquitination of AMOTL2 negatively regulates Hippo signaling activation. In terms of processing, phosphorylation at Tyr-107 is necessary for efficient binding to SRC and synergistically functioning with SRC to activate the downstream MAPK pathway.

It is found in the recycling endosome. Its subcellular location is the cytoplasm. The protein localises to the cell projection. The protein resides in the podosome. It localises to the cell junction. Functionally, regulates the translocation of phosphorylated SRC to peripheral cell-matrix adhesion sites. Required for proper architecture of actin filaments. Plays a role in coupling actin fibers to cell junctions in endothelial cells and is therefore required for correct endothelial cell morphology via facilitating transcellular transmission of mechanical force resulting in endothelial cell elongation. Required for the anchoring of radial actin fibers to CDH1 junction complexes at the cell membrane which facilitates organization of radial actin fiber structure and cellular response to contractile forces. This contributes to maintenance of cell area, size, shape, epithelial sheet organization and trophectoderm cell properties that facilitate blastocyst zona hatching. Inhibits the Wnt/beta-catenin signaling pathway, probably by recruiting CTNNB1 to recycling endosomes and hence preventing its translocation to the nucleus. Participates in angiogenesis. Activates the Hippo signaling pathway in response to cell contact inhibition via interaction with and ubiquitination by Crumbs complex-bound WWP1. Ubiquitinated AMOTL2 then interacts with LATS2 which in turn phosphorylates YAP1, excluding it from the nucleus and localizing it to the cytoplasm and tight junctions, therefore ultimately repressing YAP1-driven transcription of target genes. Acts to inhibit WWTR1/TAZ transcriptional coactivator activity via sequestering WWTR1/TAZ in the cytoplasm and at tight junctions. Regulates the size and protein composition of the podosome cortex and core at myofibril neuromuscular junctions. Selectively promotes FGF-induced MAPK activation through SRC. May play a role in the polarity, proliferation and migration of endothelial cells. The chain is Angiomotin-like protein 2 from Canis lupus familiaris (Dog).